Here is a 160-residue protein sequence, read N- to C-terminus: Nucleotide-binding protein Tgr7_1196 (160 aa).

It belongs to the YajQ family.

Its function is as follows. Nucleotide-binding protein. This is Nucleotide-binding protein Tgr7_1196 from Thioalkalivibrio sulfidiphilus (strain HL-EbGR7).